A 508-amino-acid chain; its full sequence is Pancreatic alpha-amylase (508 aa).

An N-terminal signal peptide occupies residues 1 to 15; the sequence is MKFVLLLSLIGFCWA. Gln-16 carries the post-translational modification Pyrrolidone carboxylic acid. 3 cysteine pairs are disulfide-bonded: Cys-43-Cys-101, Cys-85-Cys-130, and Cys-156-Cys-172. Asn-115, Arg-170, and Asp-179 together coordinate Ca(2+). Arg-207 serves as a coordination point for chloride. The active-site Nucleophile is Asp-209. His-213 is a binding site for Ca(2+). The active-site Proton donor is the Glu-245. Residues Asn-310 and Arg-349 each contribute to the chloride site. Intrachain disulfides connect Cys-390-Cys-396 and Cys-462-Cys-474.

Belongs to the glycosyl hydrolase 13 family. As to quaternary structure, monomer. Ca(2+) serves as cofactor. Requires chloride as cofactor.

It localises to the secreted. It is found in the extracellular space. The enzyme catalyses Endohydrolysis of (1-&gt;4)-alpha-D-glucosidic linkages in polysaccharides containing three or more (1-&gt;4)-alpha-linked D-glucose units.. This is Pancreatic alpha-amylase (Amy2) from Rattus norvegicus (Rat).